The sequence spans 1526 residues: DNA topoisomerase 2-alpha (1526 aa).

An N-acetylmethionine modification is found at Met-1. Ser-4 is subject to Phosphoserine. Lys-17 participates in a covalent cross-link: Glycyl lysine isopeptide (Lys-Gly) (interchain with G-Cter in SUMO2). Residues Asn-90, Asn-118, and 146–148 (SSN) each bind ATP. Residues Lys-154 and Lys-155 each participate in a glycyl lysine isopeptide (Lys-Gly) (interchain with G-Cter in SUMO2) cross-link. 159–166 (GRNGYGAK) provides a ligand contact to ATP. Residue Thr-280 is modified to Phosphothreonine. The interaction with DNA stretch occupies residues 340 to 342 (KKK). Lys-350 is covalently cross-linked (Glycyl lysine isopeptide (Lys-Gly) (interchain with G-Cter in SUMO2)). ATP is bound at residue 374-376 (QTK). Glycyl lysine isopeptide (Lys-Gly) (interchain with G-Cter in SUMO2) cross-links involve residues Lys-384, Lys-395, Lys-414, Lys-416, Lys-423, and Lys-438. Residues 453 to 570 (CTLILTEGDS…SLLRHRFLEE (118 aa)) form the Toprim domain. Position 459 (Glu-459) interacts with Mg(2+). Glycyl lysine isopeptide (Lys-Gly) (interchain with G-Cter in SUMO2) cross-links involve residues Lys-464, Lys-478, and Lys-527. 2 residues coordinate Mg(2+): Asp-539 and Asp-541. Glycyl lysine isopeptide (Lys-Gly) (interchain with G-Cter in SUMO2) cross-links involve residues Lys-582, Lys-597, Lys-612, Lys-620, Lys-623, Lys-630, Lys-637, Lys-653, Lys-660, and Lys-674. The 456-residue stretch at 713 to 1168 (IPSMVDGLKP…TPSDLWKEDL (456 aa)) folds into the Topo IIA-type catalytic domain. The active-site O-(5'-phospho-DNA)-tyrosine intermediate is Tyr-803. The segment at 988-997 (KLQTSLTCNS) is interaction with DNA. Residue Lys-1073 forms a Glycyl lysine isopeptide (Lys-Gly) (interchain with G-Cter in SUMO2) linkage. Basic and acidic residues predominate over residues 1087–1096 (AWKEAQQKVP). Residues 1087 to 1120 (AWKEAQQKVPEEEENEENEESESESTSPAAESGP) form a disordered region. Residues 1097–1109 (EEEENEENEESES) show a composition bias toward acidic residues. Residues Lys-1193 and Lys-1201 each participate in a glycyl lysine isopeptide (Lys-Gly) (interchain with G-Cter in SUMO2) cross-link. Ser-1210 carries the post-translational modification Phosphoserine. The disordered stretch occupies residues 1229–1526 (EKKIRRKIKS…YLEESDDDLF (298 aa)). Lys-1237 is covalently cross-linked (Glycyl lysine isopeptide (Lys-Gly) (interchain with G-Cter in SUMO1); alternate). Lys-1237 is covalently cross-linked (Glycyl lysine isopeptide (Lys-Gly) (interchain with G-Cter in SUMO2); alternate). Thr-1244 is modified (phosphothreonine). The segment covering 1254–1268 (LRQRLEKRQKREPGT) has biased composition (basic and acidic residues). Glycyl lysine isopeptide (Lys-Gly) (interchain with G-Cter in SUMO2) cross-links involve residues Lys-1272, Lys-1279, and Lys-1282. 4 positions are modified to phosphoserine: Ser-1291, Ser-1293, Ser-1295, and Ser-1298. Thr-1323 carries the post-translational modification Phosphothreonine. Positions 1326–1346 (LDSDDDFSGLDEKDEDEDFFP) are enriched in acidic residues. Phosphoserine is present on residues Ser-1328 and Ser-1333. Thr-1350 is subject to Phosphothreonine. Residues Lys-1359, Lys-1363, and Lys-1369 each participate in a glycyl lysine isopeptide (Lys-Gly) (interchain with G-Cter in SUMO2) cross-link. Phosphoserine occurs at positions 1370 and 1373. Lys-1381 is covalently cross-linked (Glycyl lysine isopeptide (Lys-Gly) (interchain with G-Cter in SUMO2)). A phosphoserine mark is found at Ser-1383 and Ser-1387. Over residues 1417-1427 (TKGQSLTSTAG) the composition is skewed to polar residues. A Glycyl lysine isopeptide (Lys-Gly) (interchain with G-Cter in SUMO2); alternate cross-link involves residue Lys-1418. The residue at position 1418 (Lys-1418) is an N6-acetyllysine; alternate. The tract at residues 1429–1435 (KKRAVPK) is interaction with PLSCR1. Lys-1438 is covalently cross-linked (Glycyl lysine isopeptide (Lys-Gly) (interchain with G-Cter in SUMO2); alternate). At Lys-1438 the chain carries N6-acetyllysine; alternate. Glycyl lysine isopeptide (Lys-Gly) (interchain with G-Cter in SUMO2) cross-links involve residues Lys-1450 and Lys-1455. Ser-1465, Ser-1467, Ser-1470, and Ser-1472 each carry phosphoserine. Residues Lys-1480 and Lys-1488 each participate in a glycyl lysine isopeptide (Lys-Gly) (interchain with G-Cter in SUMO2) cross-link. Over residues 1487–1498 (LKGEERDFHVDL) the composition is skewed to basic and acidic residues. At Ser-1521 the chain carries Phosphoserine.

Belongs to the type II topoisomerase family. As to quaternary structure, homodimer. Interacts with COPS5. Interacts with RECQL5; this stimulates DNA decatenation. Interacts with SETMAR; stimulates the topoisomerase activity. Interacts with DHX9; this interaction occurs in a E2 enzyme UBE2I- and RNA-dependent manner, negatively regulates DHX9-mediated double-stranded DNA and RNA duplex helicase activity and stimulates TOP2A-mediated supercoiled DNA relaxation activity. Interacts with HNRNPU (via C-terminus); this interaction protects the topoisomerase TOP2A from degradation and positively regulates the relaxation of supercoiled DNA in a RNA-dependent manner. Interacts with MCM3AP. Interacts with ERCC6. Interacts with PLSCR1. Interacts with GCNA; this interaction allows the resolution of topoisomerase II (TOP2A) DNA-protein cross-links. Interacts with POL1RA/RPA1 (via dock II) and UBTF in the context of Pol I complex; may assist Pol I transcription initiation by releasing supercoils occurring during DNA unwinding. Interacts with TPRN; TPRN interacts with a number of DNA damage response proteins, is recruited to sites of DNA damage and may play a role in DNA damage repair. It depends on Mg(2+) as a cofactor. Requires Mn(2+) as cofactor. Ca(2+) serves as cofactor. Phosphorylation has no effect on catalytic activity.

Its subcellular location is the cytoplasm. It is found in the nucleus. The protein resides in the nucleoplasm. The protein localises to the nucleolus. The catalysed reaction is ATP-dependent breakage, passage and rejoining of double-stranded DNA.. Its function is as follows. Key decatenating enzyme that alters DNA topology by binding to two double-stranded DNA molecules, generating a double-stranded break in one of the strands, passing the intact strand through the broken strand, and religating the broken strand. May play a role in regulating the period length of BMAL1 transcriptional oscillation. This Rattus norvegicus (Rat) protein is DNA topoisomerase 2-alpha (Top2a).